The following is a 473-amino-acid chain: MSMKIGAKAFKERIGEGLEDTVMRGAVSSAQERLYERRLSASEELGNWEKWRELGEEIRQHTLAHLDDYLYQLSESVSARGGHVFFAKTKEEASAYIQHVAQKKEAKKIVKSKSMVTEEIEMNQALEEIGCEVVESDLGEYILQVDDHEPPSHIVAPALHMTKEQIREVFHEKLGYEMSETPEDMTSFVRAILREKFLEADMGVTGCNFAVANTGSICLVTNEGNADLVTAIPKTHIAVMGMERMVPTMEELDVLVGLLCRSAVGQKLTSYISVVGPKGEEEVDGPEEFHLVIVDNGRSNILGTAFQPVLQCIRCAACINVCPVYRHVGGHSYGSIYPGPIGAVLSPLLGGYDDYQELPFASSLCAACTDACPVKIPLHELLIKHRQVIVEKEGRAPKAEMMAMKMFGMGASTPGMYQFGTKAAPLLMNRMASNGQISKGIGPLKNWTDIRDLPAPSKERFRDWFKKRQKEEQ.

2 4Fe-4S ferredoxin-type domains span residues 303–333 (GTAF…GHSY) and 352–381 (YDDY…LHEL). The [4Fe-4S] cluster site is built by Cys-312, Cys-315, Cys-318, Cys-322, Cys-365, Cys-368, and Cys-372.

The protein belongs to the LutB/YkgF family.

Is involved in L-lactate degradation and allows cells to grow with lactate as the sole carbon source. Has probably a role as an electron transporter during oxidation of L-lactate. The polypeptide is Lactate utilization protein B (Bacillus pumilus (strain SAFR-032)).